The following is a 298-amino-acid chain: Acetylglutamate kinase (298 aa).

Residues 69–70, Arg-91, and Asn-196 each bind substrate; that span reads GG.

The protein belongs to the acetylglutamate kinase family. ArgB subfamily.

It is found in the cytoplasm. It catalyses the reaction N-acetyl-L-glutamate + ATP = N-acetyl-L-glutamyl 5-phosphate + ADP. Its pathway is amino-acid biosynthesis; L-arginine biosynthesis; N(2)-acetyl-L-ornithine from L-glutamate: step 2/4. Its function is as follows. Catalyzes the ATP-dependent phosphorylation of N-acetyl-L-glutamate. The sequence is that of Acetylglutamate kinase from Rhodopseudomonas palustris (strain TIE-1).